Consider the following 304-residue polypeptide: Non-specific ribonucleoside hydrolase RihC (304 aa).

The active site involves His-233.

The protein belongs to the IUNH family. RihC subfamily.

Hydrolyzes both purine and pyrimidine ribonucleosides with a broad-substrate specificity. This chain is Non-specific ribonucleoside hydrolase RihC, found in Shigella boydii serotype 18 (strain CDC 3083-94 / BS512).